The sequence spans 172 residues: Putative F-box protein At3g13825 (172 aa).

The F-box domain occupies 1–51 (MTTLSNLSVDLVGEIFSRVPLISLSEVRCTCTTWNTLSWNILSENYVFGKA).

The sequence is that of Putative F-box protein At3g13825 from Arabidopsis thaliana (Mouse-ear cress).